The primary structure comprises 560 residues: Solute carrier family 22 member 6 (560 aa).

Residues 1–15 (MAFSDLLEQVGSTGR) are Cytoplasmic-facing. The chain crosses the membrane as a helical span at residues 16 to 36 (FQVLHVTLLSMPILMMASHNL). Residues 37 to 143 (LQNFVAAVPP…LVCDYRALKQ (107 aa)) are Extracellular-facing. Residues 144 to 164 (MSQTTYMGGVLVGAIVFGGLS) form a helical membrane-spanning segment. Residues 165–170 (DRFGRR) lie on the Cytoplasmic side of the membrane. A helical transmembrane segment spans residues 171 to 191 (VLLLISNLMMAIGGTCVAFST). At 192–201 (SFTMFCVFRV) the chain is on the extracellular side. Residues 202 to 222 (CCGMALSGLVLNSFSLIVEWI) form a helical membrane-spanning segment. Over 223 to 228 (PTRVRT) the chain is Cytoplasmic. A helical transmembrane segment spans residues 229 to 249 (VVGTGTGYCYTTGQLILAAVA). Residues 250–256 (YCIRDWR) are Extracellular-facing. The chain crosses the membrane as a helical span at residues 257-277 (WLTLAVSLPFYVSFLYSWWFL). At 278-345 (ESARWLVLTK…DLLRTSTMRT (68 aa)) the chain is on the cytoplasmic side. Residues 346-366 (ITICLSAVWFSTSFAYYGLSM) form a helical membrane-spanning segment. At 367–374 (DLQKFGVS) the chain is on the extracellular side. Residues 375–395 (IYLIQIIFGAVDIPAKIIVTI) form a helical membrane-spanning segment. The Cytoplasmic portion of the chain corresponds to 396-406 (CMSMLGRRPSQ). Residues 407–427 (CGALVLAGIMILINLLVPSDL) form a helical membrane-spanning segment. Over 428 to 433 (QMLRTS) the chain is Extracellular. A helical transmembrane segment spans residues 434–454 (LAVIGKGCLAASFNCCYLYAG). Residues 455–465 (ELYPTVIRQSG) lie on the Cytoplasmic side of the membrane. A helical transmembrane segment spans residues 466–486 (MGWVSMMARFGAMVAPMVLLL). The Extracellular segment spans residues 487–491 (GDDYP). Residues 492-512 (WIPGFIYGGAPIVSGIFAFFL) form a helical membrane-spanning segment. Over 513–560 (PETLSQPLPDTIQDIDDRGLARTNSKRLPEKLDLAMKDPSCVLLKESV) the chain is Cytoplasmic.

It belongs to the major facilitator (TC 2.A.1) superfamily. Organic cation transporter (TC 2.A.1.19) family. Post-translationally, glycosylated. Glycosylation is necessary for proper targeting of the transporter to the plasma membrane.

The protein localises to the cell membrane. The protein resides in the basolateral cell membrane. It is found in the basal cell membrane. Its function is as follows. Involved in the renal elimination of endogenous and exogenous organic anions. Functions as organic anion exchanger when the uptake of one molecule of organic anion is coupled with an efflux of one molecule of endogenous dicarboxylic acid (glutarate, ketoglutarate, etc). Mediates the sodium-independent uptake of p-aminohippurate (PAH), 2,3-dimercapto-1-propanesulfonic acid (DMPS), cidofovir, adefovir, 9-(2-phosphonylmethoxyethyl) guanine (PMEG), 9-(2-phosphonylmethoxyethyl) diaminopurine (PMEDAP), ochratoxin (OTA), acyclovir (ACV), 3'-azido-3-'deoxythymidine (AZT), cimetidine (CMD), 2,4-dichloro-phenoxyacetate (2,4-D), hippurate (HA), indoleacetate (IA), indoxyl sulfate (IS) and 3-carboxy-4-methyl-5-propyl-2-furanpropionate (CMPF) and edaravone sulfate. PAH uptake is inhibited by p-chloromercuribenzenesulphonate (PCMBS), diethyl pyrocarbonate (DEPC), indomethacin, sulindac, diclofenac, carprofen, okadaic acid, benzothiazolylcysteine (BTC), S-chlorotrifluoroethylcysteine (CTFC), cysteine S-conjugates S-dichlorovinylcysteine (DCVC), furosemide, steviol, phorbol 12-myristate 13-acetate (PMA), calcium ionophore A23187, benzylpenicillin, bumetamide, losartan, probenecid, phenol red, urate, glutarate and alpha-ketoglutarate. This chain is Solute carrier family 22 member 6 (slc22a6), found in Danio rerio (Zebrafish).